A 184-amino-acid polypeptide reads, in one-letter code: dCTP deaminase (184 aa).

107 to 112 (KSTYAR) is a dCTP binding site. The Proton donor/acceptor role is filled by glutamate 133. DCTP contacts are provided by glutamine 152, tyrosine 166, and glutamine 176.

The protein belongs to the dCTP deaminase family. Homotrimer.

The catalysed reaction is dCTP + H2O + H(+) = dUTP + NH4(+). The protein operates within pyrimidine metabolism; dUMP biosynthesis; dUMP from dCTP (dUTP route): step 1/2. In terms of biological role, catalyzes the deamination of dCTP to dUTP. The chain is dCTP deaminase from Herpetosiphon aurantiacus (strain ATCC 23779 / DSM 785 / 114-95).